We begin with the raw amino-acid sequence, 82 residues long: Protein Vpu (82 aa).

Residues 1-7 (MQPLQIS) are Extracellular-facing. The helical transmembrane segment at 8–28 (AIVALVVAAIIAIVVWSIALL) threads the bilayer. Over 29-82 (EYRKLLRQRKIDRLIDRIRERAEDSGNESEGDQEELSALVEMGGHDAPWDIDDL) the chain is Cytoplasmic. Phosphoserine; by host CK2 is present on residues S53 and S57.

Belongs to the HIV-1 VPU protein family. In terms of assembly, homopentamer. Interacts with host CD4 and BRTC; these interactions induce proteasomal degradation of CD4. Interacts with host BST2; this interaction leads to the degradation of host BST2. Interacts with host FBXW11. Interacts with host AP1M1; this interaction plays a role in the mistrafficking and subsequent degradation of host BST2. Interacts with host RANBP2; this interaction allows Vpu to down-regulate host BLM sumoylation. In terms of processing, phosphorylated by host CK2. This phosphorylation is necessary for interaction with human BTRC and degradation of CD4.

The protein localises to the host membrane. Ion channel activity is inhibited by hexamethylene amiloride in vitro. Functionally, enhances virion budding by targeting host CD4 and Tetherin/BST2 to proteasome degradation. Degradation of CD4 prevents any unwanted premature interactions between viral Env and its host receptor CD4 in the endoplasmic reticulum. Degradation of antiretroviral protein Tetherin/BST2 is important for virion budding, as BST2 tethers new viral particles to the host cell membrane. Mechanistically, Vpu bridges either CD4 or BST2 to BTRC, a substrate recognition subunit of the Skp1/Cullin/F-box protein E3 ubiquitin ligase, induces their ubiquitination and subsequent proteasomal degradation. The alteration of the E3 ligase specificity by Vpu seems to promote the degradation of host IKBKB, leading to NF-kappa-B down-regulation and subsequent apoptosis. Acts as a viroporin that forms an oligomeric ion channel in membranes. Modulates the host DNA repair mechanisms to promote degradation of nuclear viral cDNA in cells that are already productively infected in order to suppress immune sensing and proviral hyper-integration (superinfection). Manipulates PML-NBs and modulates SUMOylation of host BLM protein thereby enhancing its DNA-end processing activity toward viral unintegrated linear DNA. Also inhibits RAD52-mediated homologous repair of viral cDNA, preventing the generation of dead-end circular forms of single copies of the long terminal repeat and permitting sustained nucleolytic attack. The sequence is that of Protein Vpu from Homo sapiens (Human).